The following is a 596-amino-acid chain: MHRYRSHTCAQLRKSDVGSSVRLSGWVHRVRDHGGLLFIDLRDHYGLTQIVADPDSPAFKVAETVRGEWVIRVDGEVKARLSETVNANLPTGEIEIFAREIEVLSAAKELPLPVFGEPDYPEDIRLKYRFLDLRRDTLHKNIVARTKIIAEMRKRMGDVGFTEFSTPILTASSPEGARDFLVPSRIHPGTFYALPQAPQQYKQLIMVSGFDRYFQIAPCFRDEDPRADRLPGEFYQLDLEMSFVEQDDVLNTMEPVLRGVFETFANGKPVTQKFQRIPYDVAMRKYGSDKPDLRNPIEMQAVSDHFRDSGFKVFANILANDPKAEVWGIPAKTGGSRAFCDRMNSWAQGEGQPGLGYIFWRKEGDKLEGAGPLAKNIGEERTEAIRQQLGLADGDAAFFVAGDPKKFVSFAGAARTRAGEELNLVDRERFELCWIVDFPFFEWNEEEKKIDFAHNPFSMPQGGIDALNGEDLLGIKAFQYDMVCNGFEIASGGIRNHLPETMVKAFETVGLDRATVEERFGGLYRAFQYGAPPHGGMAAGIDRVVMLLVGAKNLREVTMFPMNQQAYDLLMNAPSEASPQQLRELALRVAPTKKDA.

L-aspartate is bound at residue Glu-175. The segment at 199–202 (QQYK) is aspartate. L-aspartate is bound by residues Arg-221 and His-454. 221–223 (RDE) serves as a coordination point for ATP. Glu-488 is an ATP binding site. Residue Arg-495 participates in L-aspartate binding. 540 to 543 (GIDR) is an ATP binding site.

This sequence belongs to the class-II aminoacyl-tRNA synthetase family. Type 1 subfamily. Homodimer.

It is found in the cytoplasm. The catalysed reaction is tRNA(Asx) + L-aspartate + ATP = L-aspartyl-tRNA(Asx) + AMP + diphosphate. Its function is as follows. Aspartyl-tRNA synthetase with relaxed tRNA specificity since it is able to aspartylate not only its cognate tRNA(Asp) but also tRNA(Asn). Reaction proceeds in two steps: L-aspartate is first activated by ATP to form Asp-AMP and then transferred to the acceptor end of tRNA(Asp/Asn). This chain is Aspartate--tRNA(Asp/Asn) ligase, found in Mesorhizobium japonicum (strain LMG 29417 / CECT 9101 / MAFF 303099) (Mesorhizobium loti (strain MAFF 303099)).